The following is a 23-amino-acid chain: Phallacidin proprotein (23 aa).

A propeptide is located at residue Pro1. The cyclopeptide (Ala-Pro) cross-link spans 2 to 8 (AWLVDCP). Residues 3–7 (WLVDC) constitute a cross-link (2'-cysteinyl-6'-hydroxytryptophan sulfoxide (Trp-Cys)). The propeptide occupies 9 to 23 (CVGDDVNRLLARGEK).

Belongs to the MSDIN fungal toxin family. In terms of processing, processed by the macrocyclase-peptidase enzyme POPB to yield a toxic cyclic heptapeptide. POPB first removes 10 residues from the N-terminus. Conformational trapping of the remaining peptide forces the enzyme to release this intermediate rather than proceed to macrocyclization. The enzyme rebinds the remaining peptide in a different conformation and catalyzes macrocyclization of the N-terminal 7 residues.

In terms of biological role, major toxin that belongs to the bicyclic heptapeptides called phallotoxins. Although structurally related to amatoxins, phallotoxins have a different mode of action, which is the stabilization of F-actin. Phallotoxins are poisonous when administered parenterally, but not orally because of poor absorption. The polypeptide is Phallacidin proprotein (Amanita fuliginea (East Asian brown death cap)).